The sequence spans 487 residues: Chromosomal replication initiator protein DnaA (487 aa).

Positions 1–79 (MEKSKNIWSL…GYNNIVIVFT (79 aa)) are domain I, interacts with DnaA modulators. A domain II region spans residues 79–142 (TNQPPKTHSN…EEEPTNFKNP (64 aa)). A domain III, AAA+ region region spans residues 143 to 359 (FLKKRYTFEN…AAVTKLKAYI (217 aa)). ATP is bound by residues Gly187, Gly189, Lys190, and Thr191. The segment at 360–487 (DLDNIEIDIE…TELMNKIKKN (128 aa)) is domain IV, binds dsDNA.

Belongs to the DnaA family. As to quaternary structure, oligomerizes as a right-handed, spiral filament on DNA at oriC.

Its subcellular location is the cytoplasm. Plays an essential role in the initiation and regulation of chromosomal replication. ATP-DnaA binds to the origin of replication (oriC) to initiate formation of the DNA replication initiation complex once per cell cycle. Binds the DnaA box (a 9 base pair repeat at the origin) and separates the double-stranded (ds)DNA. Forms a right-handed helical filament on oriC DNA; dsDNA binds to the exterior of the filament while single-stranded (ss)DNA is stabiized in the filament's interior. The ATP-DnaA-oriC complex binds and stabilizes one strand of the AT-rich DNA unwinding element (DUE), permitting loading of DNA polymerase. After initiation quickly degrades to an ADP-DnaA complex that is not apt for DNA replication. Binds acidic phospholipids. This Borreliella burgdorferi (strain ZS7) (Borrelia burgdorferi) protein is Chromosomal replication initiator protein DnaA.